A 273-amino-acid chain; its full sequence is MSASPRIGVLGAGGRMGRILIQAVQQAGYQLAAAVERPESSLVGSDAGELAGIGHIGVKISGSLVEVLKDCDVVIDFTAPVATEQHLKLCGDAGVAMVIGTTGFSEQQKQLLNETAHQTPVVYAANYSVGVNVTIKLLELASKVFGDSVDIEIIEAHHRHKVDAPSGTALMMGEAIAETLGRDLKQDAVYCREGHTGPRERQSIGFQTIRGGDIVGEHTAMFIGEGERVEITHKATNRMNFAAGAVRAAAWVVGREARKYDMKDVLGFNDIQV.

NAD(+) is bound by residues 11 to 16 (GAGGRM) and Glu-36. Residue Arg-37 coordinates NADP(+). NAD(+) is bound by residues 100–102 (GTT) and 124–127 (AANY). His-157 acts as the Proton donor/acceptor in catalysis. Residue His-158 coordinates (S)-2,3,4,5-tetrahydrodipicolinate. The Proton donor role is filled by Lys-161. 167–168 (GT) is a binding site for (S)-2,3,4,5-tetrahydrodipicolinate.

The protein belongs to the DapB family.

It localises to the cytoplasm. The catalysed reaction is (S)-2,3,4,5-tetrahydrodipicolinate + NAD(+) + H2O = (2S,4S)-4-hydroxy-2,3,4,5-tetrahydrodipicolinate + NADH + H(+). The enzyme catalyses (S)-2,3,4,5-tetrahydrodipicolinate + NADP(+) + H2O = (2S,4S)-4-hydroxy-2,3,4,5-tetrahydrodipicolinate + NADPH + H(+). The protein operates within amino-acid biosynthesis; L-lysine biosynthesis via DAP pathway; (S)-tetrahydrodipicolinate from L-aspartate: step 4/4. Its function is as follows. Catalyzes the conversion of 4-hydroxy-tetrahydrodipicolinate (HTPA) to tetrahydrodipicolinate. The protein is 4-hydroxy-tetrahydrodipicolinate reductase of Acinetobacter baylyi (strain ATCC 33305 / BD413 / ADP1).